A 145-amino-acid polypeptide reads, in one-letter code: 3-hydroxyacyl-[acyl-carrier-protein] dehydratase FabZ (145 aa).

H48 is a catalytic residue.

The protein belongs to the thioester dehydratase family. FabZ subfamily.

The protein resides in the cytoplasm. It carries out the reaction a (3R)-hydroxyacyl-[ACP] = a (2E)-enoyl-[ACP] + H2O. Its function is as follows. Involved in unsaturated fatty acids biosynthesis. Catalyzes the dehydration of short chain beta-hydroxyacyl-ACPs and long chain saturated and unsaturated beta-hydroxyacyl-ACPs. This is 3-hydroxyacyl-[acyl-carrier-protein] dehydratase FabZ from Marinobacter nauticus (strain ATCC 700491 / DSM 11845 / VT8) (Marinobacter aquaeolei).